The chain runs to 737 residues: Catalase-peroxidase (737 aa).

The disordered stretch occupies residues 1-33 (MPEATEHPPIGEAQTEPAQSGCPMVIKPPVEGG). Residues 107–235 (WHAAGTYRVQ…LGASHMGLIY (129 aa)) constitute a cross-link (tryptophyl-tyrosyl-methioninium (Trp-Tyr) (with M-261)). The Proton acceptor role is filled by His-108. Residues 235–261 (YVNPEGPEGNPDPIAAAIDIRETFGRM) constitute a cross-link (tryptophyl-tyrosyl-methioninium (Tyr-Met) (with W-107)). Residue His-276 participates in heme binding.

This sequence belongs to the peroxidase family. Peroxidase/catalase subfamily. Homodimer or homotetramer. Heme b is required as a cofactor. Post-translationally, formation of the three residue Trp-Tyr-Met cross-link is important for the catalase, but not the peroxidase activity of the enzyme.

It carries out the reaction H2O2 + AH2 = A + 2 H2O. The catalysed reaction is 2 H2O2 = O2 + 2 H2O. Functionally, bifunctional enzyme with both catalase and broad-spectrum peroxidase activity. May play a role in polycyclic aromatic hydrocarbon (PAH) metabolism. The sequence is that of Catalase-peroxidase from Mycolicibacterium vanbaalenii (Mycobacterium vanbaalenii).